The chain runs to 704 residues: MQDERPVDQLTEAEAAAELAHLAEAIAAADTAYHTHDAPRISDADYDALKRRNRAIEERFPALRRSDSPSERVGGALAEGFAKVRHEVRMLSLENAFELAEVEEWIERIRRFLGHVGDLRFTAEPKIDGLSLSLRYEKGRLVQAATRGDGETGENVTENARTIGDLPTELTGAPDLLEVRGEVYMRHADFAALNERQEATGQRLFANPRNAAAGSLRQLDPAVTASRPLHFFAYAWGAHSEPLADTQQGAIARLSALGFATNPLTRLCTGPDELLAHYADIERQRASLGYDIDGVVYKVDDLALQRRLGFRASTPRWAIAHKFAAELAWTQLEGIDIQVGRTGALSPVARLKPVTVGGVVVANATLHNEDYIAGRDSKGQEIRGGKDIRVGDWVQVYRAGDVIPKVAEVDLSRRPEGAEPYRFPDTCPDCGSAAIREPGDSVRRCTGGLICPAQQVERLKHFVSRAAFDIEGLGARQVEALWRDGWIRQPADIFELPNRYRDGLQRLENREGWGRKSAENLLAAIEARRRIALHRLIFALGIRHVGETTATLLATHYGSWAAFEAAMTRAEVGTGSEWQDLLSIDGVGAVLATSLVTTFHQEAERAAIDALAAHLTVEDAEMRAPVESPIAGKIVVFTGTLEKMSRNEAKARAEALGAKVSGSVSARTDLVVAGPGAGSKAKQAAALGVETIGEDAWLRLIGDA.

Residues 43-47 (DADYD), 92-93 (SL), and Glu-124 contribute to the NAD(+) site. Lys-126 (N6-AMP-lysine intermediate) is an active-site residue. Residues Arg-147, Glu-182, Lys-298, and Lys-322 each coordinate NAD(+). Residues Cys-427, Cys-430, Cys-445, and Cys-451 each coordinate Zn(2+). A BRCT domain is found at 625-704 (PVESPIAGKI…DAWLRLIGDA (80 aa)).

This sequence belongs to the NAD-dependent DNA ligase family. LigA subfamily. Requires Mg(2+) as cofactor. The cofactor is Mn(2+).

The catalysed reaction is NAD(+) + (deoxyribonucleotide)n-3'-hydroxyl + 5'-phospho-(deoxyribonucleotide)m = (deoxyribonucleotide)n+m + AMP + beta-nicotinamide D-nucleotide.. In terms of biological role, DNA ligase that catalyzes the formation of phosphodiester linkages between 5'-phosphoryl and 3'-hydroxyl groups in double-stranded DNA using NAD as a coenzyme and as the energy source for the reaction. It is essential for DNA replication and repair of damaged DNA. The sequence is that of DNA ligase from Cereibacter sphaeroides (strain ATCC 17025 / ATH 2.4.3) (Rhodobacter sphaeroides).